Here is a 91-residue protein sequence, read N- to C-terminus: Mercuric transport protein periplasmic component (91 aa).

An N-terminal signal peptide occupies residues 1–19 (MKKLFAALALAAVVAPVWA). An HMA domain is found at 22-88 (QTVTLSVPGM…ATGDAGYPSS (67 aa)). 2 residues coordinate Hg(2+): cysteine 33 and cysteine 36.

The protein belongs to the MerP family. Monomer.

The protein resides in the periplasm. Involved in mercury resistance. Acts as a mercury scavenger that specifically binds to a mercuric ion in the periplasm and probably passes it to the cytoplasmic mercuric reductase MerA via the mercuric transport protein MerT. This Alcaligenes sp protein is Mercuric transport protein periplasmic component (merP).